The sequence spans 623 residues: Glutathione import ATP-binding protein GsiA (623 aa).

ABC transporter domains are found at residues 15–269 (VENL…RALL) and 314–564 (LRVR…RKLL). ATP-binding positions include 49–56 (GESGSGKS) and 357–364 (GESGSGKS).

Belongs to the ABC transporter superfamily. Glutathione importer (TC 3.A.1.5.11) family. In terms of assembly, the complex is composed of two ATP-binding proteins (GsiA), two transmembrane proteins (GsiC and GsiD) and a solute-binding protein (GsiB).

The protein localises to the cell inner membrane. The enzyme catalyses glutathione(out) + ATP + H2O = glutathione(in) + ADP + phosphate + H(+). Functionally, part of the ABC transporter complex GsiABCD involved in glutathione import. Responsible for energy coupling to the transport system. In Escherichia coli O1:K1 / APEC, this protein is Glutathione import ATP-binding protein GsiA.